Here is a 193-residue protein sequence, read N- to C-terminus: dCTP deaminase (193 aa).

DCTP is bound by residues 110–115 (RSSLAR), aspartate 128, 136–138 (VLE), tyrosine 171, lysine 178, and glutamine 182. Residue glutamate 138 is the Proton donor/acceptor of the active site. The tract at residues 168 to 193 (DRPYNRRQDAKYKNQQGAVSSRIDED) is disordered. Residues 170-179 (PYNRRQDAKY) show a composition bias toward basic and acidic residues.

The protein belongs to the dCTP deaminase family. In terms of assembly, homotrimer.

It catalyses the reaction dCTP + H2O + H(+) = dUTP + NH4(+). It functions in the pathway pyrimidine metabolism; dUMP biosynthesis; dUMP from dCTP (dUTP route): step 1/2. In terms of biological role, catalyzes the deamination of dCTP to dUTP. The protein is dCTP deaminase of Photorhabdus laumondii subsp. laumondii (strain DSM 15139 / CIP 105565 / TT01) (Photorhabdus luminescens subsp. laumondii).